Consider the following 199-residue polypeptide: Recombination protein RecR (199 aa).

The segment at 58 to 73 (CSVCGNLTDTDVCPLC) adopts a C4-type zinc-finger fold. One can recognise a Toprim domain in the interval 81 to 176 (SVICVVEDPR…KTTRIAHGIP (96 aa)).

This sequence belongs to the RecR family.

Functionally, may play a role in DNA repair. It seems to be involved in an RecBC-independent recombinational process of DNA repair. It may act with RecF and RecO. The chain is Recombination protein RecR from Acetivibrio thermocellus (strain ATCC 27405 / DSM 1237 / JCM 9322 / NBRC 103400 / NCIMB 10682 / NRRL B-4536 / VPI 7372) (Clostridium thermocellum).